We begin with the raw amino-acid sequence, 56 residues long: Conotoxin reg3.9 (56 aa).

The first 8 residues, 1–8 (LLFPLSAL), serve as a signal peptide directing secretion. The disordered stretch occupies residues 1–22 (LLFPLSALPLDGDQPADQPAER). Positions 9 to 40 (PLDGDQPADQPAERMQDISPEQNFWFDLVERG) are excised as a propeptide. 3 disulfide bridges follow: Cys-41–Cys-55, Cys-42–Cys-53, and Cys-47–Cys-56.

Belongs to the conotoxin M superfamily. Expressed by the venom duct.

Its subcellular location is the secreted. This chain is Conotoxin reg3.9, found in Conus regius (Crown cone).